Consider the following 376-residue polypeptide: Actin, cytoplasmic (376 aa).

This sequence belongs to the actin family.

The protein resides in the cytoplasm. It localises to the cytoskeleton. It carries out the reaction ATP + H2O = ADP + phosphate + H(+). Actins are highly conserved proteins that are involved in various types of cell motility and are ubiquitously expressed in all eukaryotic cells. The sequence is that of Actin, cytoplasmic from Tetrahymena pyriformis.